A 261-amino-acid chain; its full sequence is uncharacterized protein (261 aa).

Residues 1 to 12 are compositionally biased toward polar residues; it reads MSRTSSQNQEII. The disordered stretch occupies residues 1-139; sequence MSRTSSQNQE…KELDTINKKT (139 aa). Positions 23-55 are enriched in low complexity; it reads SSKPSKSSKPSKSSKPSKSSKTSKSSRSSGSKS. Residues 65–74 are compositionally biased toward basic and acidic residues; that stretch reads SRKDKYKEEY. Residues 79–108 show a composition bias toward acidic residues; sequence YPDEQEYEQEYEQEYEQEYQDNGEQTEEFV. Over residues 122–139 the composition is skewed to basic and acidic residues; sequence DERQTQSNKELDTINKKT. Coiled coils occupy residues 151–181 and 218–243; these read MDHD…IIKL and EDII…KKIE.

This is an uncharacterized protein from Acanthamoeba polyphaga (Amoeba).